A 417-amino-acid polypeptide reads, in one-letter code: Pigment epithelium-derived factor (417 aa).

The signal sequence occupies residues 1 to 19 (MQALVLLLWTGALLGHGSS). The interval 17–41 (GSSQNVPSSSEGSPVPDSTGEPVEE) is disordered. Residues 18-28 (SSQNVPSSSEG) show a composition bias toward polar residues. The residue at position 20 (glutamine 20) is a Pyrrolidone carboxylic acid. The residue at position 24 (serine 24) is a Phosphoserine. Asparagine 284 is a glycosylation site (N-linked (GlcNAc...) asparagine).

The protein belongs to the serpin family. In terms of assembly, interacts with PNPLA2; this interaction stimulates the phospholipase A2 activity of PNPLA2. Highly expressed in the liver, gastric glandular mucosa and renal tubules. It is also expressed in the brain, heart, lung retina and testes.

The protein localises to the secreted. The protein resides in the melanosome. Neurotrophic protein; induces extensive neuronal differentiation in retinoblastoma cells. Potent inhibitor of angiogenesis. As it does not undergo the S (stressed) to R (relaxed) conformational transition characteristic of active serpins, it exhibits no serine protease inhibitory activity. This Mus musculus (Mouse) protein is Pigment epithelium-derived factor (Serpinf1).